We begin with the raw amino-acid sequence, 346 residues long: Glucose-6-phosphatase 3 (346 aa).

The Lumenal portion of the chain corresponds to 1–24 (MESTLGAGIVIAEALQNQLAWLEN). A helical membrane pass occupies residues 25–45 (VWLWITFLGDPKILFLFYFPA). The Cytoplasmic segment spans residues 46-54 (AYYASRRVG). Residues 55–75 (IAVLWISLITEWLNLIFKWFL) traverse the membrane as a helical segment. Over 76-114 (FGDRPFWWVHESGYYSQAPAQVHQFPSSCETGPGSPSGH) the chain is Lumenal. Residue arginine 79 coordinates substrate. The active-site Proton donor is the histidine 114. Residues 115–135 (CMITGAALWPIMTALSSQVAT) traverse the membrane as a helical segment. Over 136-146 (RARSRWVRVMP) the chain is Cytoplasmic. Residues 147 to 164 (SLAYCTFLLAVGLSRIFI) traverse the membrane as a helical segment. Arginine 161 contributes to the substrate binding site. The Lumenal portion of the chain corresponds to 165–169 (LAHFP). Residue histidine 167 is the Nucleophile of the active site. A helical transmembrane segment spans residues 170–186 (HQVLAGLITGAVLGWLM). At 187-197 (TPRVPMERELS) the chain is on the cytoplasmic side. A helical membrane pass occupies residues 198-218 (FYGLTALALMLGTSLIYWTLF). Over 219 to 254 (TLGLDLSWSISLAFKWCERPEWIHVDSRPFASLSRD) the chain is Lumenal. A helical membrane pass occupies residues 255–273 (SGAALGLGIALHSPCYAQV). The Cytoplasmic portion of the chain corresponds to 274–283 (RRAQLGNGQK). Residues 284–304 (IACLVLAMGLLGPLDWLGHPP) traverse the membrane as a helical segment. The Lumenal portion of the chain corresponds to 305 to 307 (QIS). Residues 308–328 (LFYIFNFLKYTLWPCLVLALV) form a helical membrane-spanning segment. The Cytoplasmic segment spans residues 329-346 (PWAVHMFSAQEAPPIHSS).

This sequence belongs to the glucose-6-phosphatase family. As to expression, ubiquitously expressed. Highly expressed in skeletal muscle, at intermediate levels in heart, brain, placenta, kidney, colon, thymus, spleen and pancreas. Also detected in testis, prostate, ovary, liver, lung, small intestine and peripheral blood lymphocytes.

The protein localises to the endoplasmic reticulum membrane. It catalyses the reaction D-glucose 6-phosphate + H2O = D-glucose + phosphate. The protein operates within carbohydrate biosynthesis; gluconeogenesis. Its activity is regulated as follows. Inhibited by vanadate. In terms of biological role, hydrolyzes glucose-6-phosphate to glucose in the endoplasmic reticulum. May form with the glucose-6-phosphate transporter (SLC37A4/G6PT) a ubiquitously expressed complex responsible for glucose production through glycogenolysis and gluconeogenesis. Probably required for normal neutrophil function. The polypeptide is Glucose-6-phosphatase 3 (G6PC3) (Homo sapiens (Human)).